We begin with the raw amino-acid sequence, 144 residues long: MRLNTLSPAAGAKSAAKRVGRGIGSGTGKTCGRGHKGQKSRSGGGVRVGFEGGQMPLKIRLPKFGFTSRKALVSAEIRISELAKVNGDVIDLNALKDANLVTRNIQFAKIVLSGTIERPVTVKGLKVTQGARAAIEAAGGKIEE.

The segment at 1–49 (MRLNTLSPAAGAKSAAKRVGRGIGSGTGKTCGRGHKGQKSRSGGGVRVG) is disordered. The span at 21–31 (RGIGSGTGKTC) shows a compositional bias: gly residues.

Belongs to the universal ribosomal protein uL15 family. In terms of assembly, part of the 50S ribosomal subunit.

Its function is as follows. Binds to the 23S rRNA. This Shewanella halifaxensis (strain HAW-EB4) protein is Large ribosomal subunit protein uL15.